A 342-amino-acid chain; its full sequence is Trans-3-hydroxy-L-proline dehydratase (342 aa).

Ser90 functions as the Proton acceptor in the catalytic mechanism. Residues 91–92, Asp252, and 257–258 contribute to the substrate site; these read GS and GT.

This sequence belongs to the proline racemase family.

The catalysed reaction is trans-3-hydroxy-L-proline = 1-pyrroline-2-carboxylate + H2O. Catalyzes the dehydration of trans-3-hydroxy-L-proline (t3LHyp) to Delta(1)-pyrroline-2-carboxylate (Pyr2C). Can also catalyze the epimerization of trans-4-hydroxy-L-proline (t4LHyp) to cis-4-hydroxy-D-proline (c4DHyp), albeit with 150-fold lower efficiency. May be involved in the degradation pathway that converts t3LHyp to L-proline, which would allow R.meliloti to grow on t3LHyp as a sole carbon source. Displays no proline racemase activity. The protein is Trans-3-hydroxy-L-proline dehydratase of Rhizobium meliloti (strain 1021) (Ensifer meliloti).